A 419-amino-acid polypeptide reads, in one-letter code: UDP-N-acetylglucosamine 1-carboxyvinyltransferase (419 aa).

22–23 (KN) serves as a coordination point for phosphoenolpyruvate. R93 serves as a coordination point for UDP-N-acetyl-alpha-D-glucosamine. C117 functions as the Proton donor in the catalytic mechanism. C117 carries the post-translational modification 2-(S-cysteinyl)pyruvic acid O-phosphothioketal. UDP-N-acetyl-alpha-D-glucosamine-binding positions include 122–126 (RPVDL), D308, and I330.

Belongs to the EPSP synthase family. MurA subfamily.

It localises to the cytoplasm. The catalysed reaction is phosphoenolpyruvate + UDP-N-acetyl-alpha-D-glucosamine = UDP-N-acetyl-3-O-(1-carboxyvinyl)-alpha-D-glucosamine + phosphate. It functions in the pathway cell wall biogenesis; peptidoglycan biosynthesis. Cell wall formation. Adds enolpyruvyl to UDP-N-acetylglucosamine. This chain is UDP-N-acetylglucosamine 1-carboxyvinyltransferase, found in Pseudomonas putida (Arthrobacter siderocapsulatus).